The sequence spans 162 residues: HTH-type transcriptional regulator IscR (162 aa).

The region spanning 2–131 (RLTSKGRYAV…NNITLGELVN (130 aa)) is the HTH rrf2-type domain. A DNA-binding region (H-T-H motif) is located at residues 28–51 (LADISERQGISLSYLEQLFSRLRK). Residues Cys-92, Cys-98, and Cys-104 each contribute to the [2Fe-2S] cluster site. The segment at 140–162 (GRQHTHDAPRTRTQDAIDVKLRA) is disordered. Basic and acidic residues predominate over residues 143 to 162 (HTHDAPRTRTQDAIDVKLRA).

It depends on [2Fe-2S] cluster as a cofactor.

In terms of biological role, regulates the transcription of several operons and genes involved in the biogenesis of Fe-S clusters and Fe-S-containing proteins. The chain is HTH-type transcriptional regulator IscR from Shigella flexneri.